A 224-amino-acid polypeptide reads, in one-letter code: Ribonuclease HII (224 aa).

In terms of domain architecture, RNase H type-2 spans 17-201; sequence GTVIGVDEAG…VLSNLSVKKV (185 aa). 3 residues coordinate a divalent metal cation: D23, E24, and D111.

This sequence belongs to the RNase HII family. It depends on Mn(2+) as a cofactor. Requires Mg(2+) as cofactor.

Its subcellular location is the cytoplasm. The catalysed reaction is Endonucleolytic cleavage to 5'-phosphomonoester.. Its function is as follows. Endonuclease that specifically degrades the RNA of RNA-DNA hybrids. The sequence is that of Ribonuclease HII from Pseudothermotoga lettingae (strain ATCC BAA-301 / DSM 14385 / NBRC 107922 / TMO) (Thermotoga lettingae).